Here is a 402-residue protein sequence, read N- to C-terminus: UDP-glucose 6-dehydrogenase (402 aa).

Residues 2–19 (KIAV…GVLL), V11, D29, K34, T83, T118, and E145 each bind NAD(+). Residues 141–145 (EFLRE), K204, N208, 249–253 (YNNPS), and G257 each bind substrate. NAD(+) is bound at residue Y259. C260 functions as the Nucleophile in the catalytic mechanism. K263 contacts NAD(+). A substrate-binding site is contributed by K320. R327 serves as a coordination point for NAD(+).

Belongs to the UDP-glucose/GDP-mannose dehydrogenase family.

It carries out the reaction UDP-alpha-D-glucose + 2 NAD(+) + H2O = UDP-alpha-D-glucuronate + 2 NADH + 3 H(+). Its pathway is nucleotide-sugar biosynthesis; UDP-alpha-D-glucuronate biosynthesis; UDP-alpha-D-glucuronate from UDP-alpha-D-glucose: step 1/1. Its function is as follows. Catalyzes the formation of UDP-glucuronic acid which is required for capsular hyaluronic acid synthesis. The protein is UDP-glucose 6-dehydrogenase (hasB) of Streptococcus pyogenes serotype M3 (strain ATCC BAA-595 / MGAS315).